The sequence spans 43 residues: Omega-agatoxin-Aa3c (43 aa).

3 cysteine pairs are disulfide-bonded: Cys-2/Cys-19, Cys-9/Cys-25, and Cys-27/Cys-38.

Belongs to the neurotoxin 04 (omega-agtx) family. 03 (type II/III omega-agtx) subfamily. As to expression, expressed by the venom gland.

The protein localises to the secreted. In terms of biological role, omega-agatoxins are antagonists of voltage-gated calcium channels (Cav). This Agelenopsis aperta (North American funnel-web spider) protein is Omega-agatoxin-Aa3c.